The chain runs to 279 residues: uncharacterized protein (279 aa).

Low complexity-rich tracts occupy residues 1-25 (MNEN…NNNN), 86-151 (PSQS…NGNN), and 232-250 (NKNN…DDNN). Disordered regions lie at residues 1–27 (MNEN…NNIK), 83–153 (NLFP…NNID), and 213–260 (QSVN…KVKS).

This is an uncharacterized protein from Dictyostelium discoideum (Social amoeba).